We begin with the raw amino-acid sequence, 117 residues long: Holo-[acyl-carrier-protein] synthase (117 aa).

The Mg(2+) site is built by D8 and E58.

It belongs to the P-Pant transferase superfamily. AcpS family. Requires Mg(2+) as cofactor.

It is found in the cytoplasm. The catalysed reaction is apo-[ACP] + CoA = holo-[ACP] + adenosine 3',5'-bisphosphate + H(+). Its function is as follows. Transfers the 4'-phosphopantetheine moiety from coenzyme A to a Ser of acyl-carrier-protein. The sequence is that of Holo-[acyl-carrier-protein] synthase from Staphylococcus epidermidis (strain ATCC 35984 / DSM 28319 / BCRC 17069 / CCUG 31568 / BM 3577 / RP62A).